We begin with the raw amino-acid sequence, 511 residues long: Maturase K (511 aa).

Belongs to the intron maturase 2 family. MatK subfamily.

The protein localises to the plastid. The protein resides in the chloroplast. Usually encoded in the trnK tRNA gene intron. Probably assists in splicing its own and other chloroplast group II introns. This chain is Maturase K, found in Campsis radicans (Trumpet creeper).